The following is a 382-amino-acid chain: Carbamoyl phosphate synthase small chain (382 aa).

The segment at 1-189 (MIKSALLVLE…ELPAAKNESE (189 aa)) is CPSase. L-glutamine is bound by residues serine 47, glycine 241, and glycine 243. Residues 193–380 (HVVAYDYGVK…IDLIQTYRSS (188 aa)) enclose the Glutamine amidotransferase type-1 domain. Cysteine 269 serves as the catalytic Nucleophile. Positions 270, 273, 311, 313, and 314 each coordinate L-glutamine. Active-site residues include histidine 353 and glutamate 355.

It belongs to the CarA family. As to quaternary structure, composed of two chains; the small (or glutamine) chain promotes the hydrolysis of glutamine to ammonia, which is used by the large (or ammonia) chain to synthesize carbamoyl phosphate. Tetramer of heterodimers (alpha,beta)4.

It catalyses the reaction hydrogencarbonate + L-glutamine + 2 ATP + H2O = carbamoyl phosphate + L-glutamate + 2 ADP + phosphate + 2 H(+). The enzyme catalyses L-glutamine + H2O = L-glutamate + NH4(+). It participates in amino-acid biosynthesis; L-arginine biosynthesis; carbamoyl phosphate from bicarbonate: step 1/1. Its pathway is pyrimidine metabolism; UMP biosynthesis via de novo pathway; (S)-dihydroorotate from bicarbonate: step 1/3. Functionally, small subunit of the glutamine-dependent carbamoyl phosphate synthetase (CPSase). CPSase catalyzes the formation of carbamoyl phosphate from the ammonia moiety of glutamine, carbonate, and phosphate donated by ATP, constituting the first step of 2 biosynthetic pathways, one leading to arginine and/or urea and the other to pyrimidine nucleotides. The small subunit (glutamine amidotransferase) binds and cleaves glutamine to supply the large subunit with the substrate ammonia. The polypeptide is Carbamoyl phosphate synthase small chain (Pectobacterium atrosepticum (strain SCRI 1043 / ATCC BAA-672) (Erwinia carotovora subsp. atroseptica)).